A 633-amino-acid polypeptide reads, in one-letter code: Probable alkaline/neutral invertase A, chloroplastic (633 aa).

A chloroplast-targeting transit peptide spans 1–71; sequence MNAITFLGNS…TNAVPFCTDR (71 aa). Serine 623 carries the phosphoserine modification.

The protein belongs to the glycosyl hydrolase 100 family. Expressed in flowers.

Its subcellular location is the plastid. It localises to the chloroplast. It catalyses the reaction Hydrolysis of terminal non-reducing beta-D-fructofuranoside residues in beta-D-fructofuranosides.. Its function is as follows. Chloroplastic invertase that cleaves sucrose into glucose and fructose and may participate in the carbon flux between the cytosol and plastids in leaves. This is Probable alkaline/neutral invertase A, chloroplastic from Arabidopsis thaliana (Mouse-ear cress).